Consider the following 344-residue polypeptide: Lipase chaperone (344 aa).

Residues arginine 13 to glycine 35 form a helical membrane-spanning segment.

It belongs to the lipase chaperone family.

It localises to the cell inner membrane. In terms of biological role, may be involved in the folding of the extracellular lipase during its passage through the periplasm. This chain is Lipase chaperone, found in Burkholderia vietnamiensis (strain G4 / LMG 22486) (Burkholderia cepacia (strain R1808)).